We begin with the raw amino-acid sequence, 590 residues long: MASEIHMTGPMCLIENTNGRLMVNPEALKILSAITQPVVVVAIVGLYRTGKSYLMNKLAGKKKGFSLGSTVQSHTKGIWMWCVPHPKKPGHVLVLLDTEGLGDVEKGDNQNDSWIFALAILLSSTFVYNSMGTINQQAMDQLHYVTELTHRIRSKSSPDENENEDSADFVSFFPDFVWTLRDFSLDLEADGQPITADEYLTYSLKLKKGTSEKDKTFNLPRLCIRKFFPKKKCFVFDRPVHRKKLAQLEKLHDEELDPEFVQQVADFCSYIFSNSKTKTLSGGIKVNGPRLESLVLTYVNAISSGDLPCMENAVLALAQIENSAAVQKAVAHYEQQMGQKVQLPTETLQELLDLHRDSEREAIEVFIRSSFKDVDHLFQKELAAQLEKKRDDFCKQNQEASSDRCSALLQDIFSPLEEEVKMGIYSKPGGYRLFIQKLQDLKKKYYEEPRKGIQAEEILQTYLKSKESMTDAILQTDQTLTEKEKEIEVERVKAESAQASTKMLQEIQRKNEQMMEQKERSYQEHLKQLTEKMERDRAQLLKEQERTLALKLQEQERLLKEGFQTESRKMQNEIQDLQKKMRQRRTCTIS.

The segment at 1–309 (MASEIHMTGP…NAISSGDLPC (309 aa)) is GTPase domain (Globular). Positions 35 to 276 (TQPVVVVAIV…FCSYIFSNSK (242 aa)) constitute a GB1/RHD3-type G domain. GTP is bound by residues 45–52 (GLYRTGKS), 67–69 (LGS), and 97–101 (DTEGL). Ser156 carries the phosphoserine modification. Position 587 is a cysteine methyl ester (Cys587). Cys587 carries S-farnesyl cysteine lipidation. Thr588 is modified (phosphothreonine). A propeptide spans 588-590 (TIS) (removed in mature form).

This sequence belongs to the TRAFAC class dynamin-like GTPase superfamily. GB1/RHD3 GTPase family. GB1 subfamily. In terms of assembly, homodimer; homodimerization occurs upon GTP-binding and is required for the second hydrolysis step from GDP to GMP. Undergoes conformational changes and oligomerization upon GTP-binding and hydrolysis. Heterodimer with other family members, including GBP2, GBP3, GBP4 and GBP5. Dimerization regulates subcellular location to membranous structures. Interacts with SQSTM1. Interacts (when phosphorylated) with 14-3-3 protein sigma (SFN); leading to GBP1 retention in the cytosol and inactivation. Post-translationally, isoprenylation is required for proper subcellular location. In terms of processing, phosphorylated at Ser-156 by PIM1 in absence of infection, inhibits GBP1: phosphorylation promotes interaction with 14-3-3 protein sigma (SFN), leading to GBP1 retention in the cytosol. Dephosphorylated in response to infection, liberating GBP1.

It is found in the cytoplasmic vesicle membrane. The protein localises to the golgi apparatus membrane. The protein resides in the cell membrane. It localises to the cytoplasm. Its subcellular location is the cytosol. It is found in the secreted. The enzyme catalyses GTP + H2O = GDP + phosphate + H(+). It carries out the reaction GDP + H2O = GMP + phosphate + H(+). Its function is as follows. Interferon (IFN)-inducible GTPase that plays important roles in innate immunity against a diverse range of bacterial, viral and protozoan pathogens. Hydrolyzes GTP to GMP in two consecutive cleavage reactions: GTP is first hydrolyzed to GDP and then to GMP in a processive manner. Following infection, recruited to the pathogen-containing vacuoles or vacuole-escaped bacteria and promotes both inflammasome assembly and autophagy. Acts as a positive regulator of inflammasome assembly by facilitating the detection of inflammasome ligands from pathogens. Involved in the lysis of pathogen-containing vacuoles, releasing pathogens into the cytosol. Following pathogen release in the cytosol, forms a protein coat in a GTPase-dependent manner that encapsulates pathogens and promotes the detection of ligands by pattern recognition receptors. Plays a key role in inflammasome assembly in response to infection by Gram-negative bacteria: following pathogen release in the cytosol, forms a protein coat that encapsulates Gram-negative bacteria and directly binds to lipopolysaccharide (LPS), disrupting the O-antigen barrier and unmasking lipid A that is that detected by the non-canonical inflammasome effector CASP4/CASP11. Also promotes recruitment of proteins that mediate bacterial cytolysis, leading to release double-stranded DNA (dsDNA) that activates the AIM2 inflammasome. Involved in autophagy by regulating bacteriolytic peptide generation via its interaction with ubiquitin-binding protein SQSTM1, which delivers monoubiquitinated proteins to autolysosomes for the generation of bacteriolytic peptides. Confers protection to several pathogens, including the bacterial pathogens L.monocytogenes and M.bovis BCG as well as the protozoan pathogen T.gondii. Exhibits antiviral activity against influenza virus. This Chlorocebus aethiops (Green monkey) protein is Guanylate-binding protein 1 (GBP1).